Reading from the N-terminus, the 202-residue chain is Protein Nef (202 aa).

Residue Gly-2 is the site of N-myristoyl glycine; by host attachment. Ser-6 carries the phosphoserine; by host modification. The interval 62-65 is acidic; interacts with host PACS1 and PACS2; stabilizes the interaction of NEF/MHC-I with host AP1M1; necessary for MHC-I internalization; sequence EEEE. An SH3-binding; interaction with Src family tyrosine kinases region spans residues 69–78; sequence PVTPQVPLRP. Residues 72 to 75 carry the PxxP; stabilizes the interaction of NEF/MHC-I with host AP1M1; necessary for MHC-I internalization motif; that stretch reads PQVP. The interval 108 to 124 is mediates dimerization, Nef-PTE1 interaction; the sequence is DILDLWIYHTQGYFPDW. Positions 148–180 are binding to ATP6V1H; that stretch reads VEPDKVEEANKGENTRLLHPVSLHGMDDPEREV. Positions 164–165 match the Dileucine internalization motif; necessary for CD4 internalization motif; it reads LL. The Diacidic; necessary for CD4 internalization motif lies at 174 to 175; sequence DD.

It belongs to the lentivirus primate group Nef protein family. As to quaternary structure, monomer; cytosolic form. Homodimer; membrane bound form. Interacts with Nef associated p21-activated kinase (PAK2); this interaction activates PAK2. Associates with the Nef-MHC-I-AP1 complex; this complex is required for MHC-I internalization. Interacts (via C-terminus) with host PI3-kinase. Interacts with host PACS1; this interaction seems to be weak. Interacts with host PACS2. Interacts with host LCK and MAPK3; these interactions inhibit the kinase activity of the latter. Interacts with host ATP6V1H; this interaction may play a role in CD4 endocytosis. Associates with the CD4-Nef-AP2 complex; this complex is required for CD4 internalization. Interacts with host AP2 subunit alpha and AP2 subunit sigma2. Interacts with TCR-zeta chain; this interaction up-regulates the Fas ligand (FasL) surface expression. Interacts with host HCK, LYN, and SRC; these interactions activate the Src family kinases. Interacts with MAP3K5; this interaction inhibits the Fas and TNFR-mediated death signals. Interacts with beta-COP and PTE1. Interacts with human RACK1; this increases Nef phosphorylation by PKC. Interacts with TP53; this interaction decreases the half-life of TP53, protecting the infected cell against p53-mediated apoptosis. Post-translationally, the virion-associated Nef proteins are cleaved by the viral protease to release the soluble C-terminal core protein. Nef is probably cleaved concomitantly with viral structural proteins on maturation of virus particles. Myristoylated. In terms of processing, phosphorylated on serine residues, probably by host PKCdelta and theta.

It is found in the host cell membrane. The protein localises to the virion. The protein resides in the secreted. Its subcellular location is the host Golgi apparatus membrane. In terms of biological role, factor of infectivity and pathogenicity, required for optimal virus replication. Alters numerous pathways of T-lymphocyte function and down-regulates immunity surface molecules in order to evade host defense and increase viral infectivity. Alters the functionality of other immunity cells, like dendritic cells, monocytes/macrophages and NK cells. Its function is as follows. In infected CD4(+) T-lymphocytes, down-regulates the surface MHC-I, mature MHC-II, CD4, CD28, CCR5 and CXCR4 molecules. Mediates internalization and degradation of host CD4 through the interaction of with the cytoplasmic tail of CD4, the recruitment of AP-2 (clathrin adapter protein complex 2), internalization through clathrin coated pits, and subsequent transport to endosomes and lysosomes for degradation. Diverts host MHC-I molecules to the trans-Golgi network-associated endosomal compartments by an endocytic pathway to finally target them for degradation. MHC-I down-regulation may involve AP-1 (clathrin adapter protein complex 1) or possibly Src family kinase-ZAP70/Syk-PI3K cascade recruited by PACS2. In consequence infected cells are masked for immune recognition by cytotoxic T-lymphocytes. Decreasing the number of immune receptors also prevents reinfection by more HIV particles (superinfection). Down-regulates host SERINC3 and SERINC5 thereby excluding these proteins from the viral particles. Virion infectivity is drastically higher when SERINC3 or SERINC5 are excluded from the viral envelope, because these host antiviral proteins impair the membrane fusion event necessary for subsequent virion penetration. Bypasses host T-cell signaling by inducing a transcriptional program nearly identical to that of anti-CD3 cell activation. Interaction with TCR-zeta chain up-regulates the Fas ligand (FasL). Increasing surface FasL molecules and decreasing surface MHC-I molecules on infected CD4(+) cells send attacking cytotoxic CD8+ T-lymphocytes into apoptosis. Functionally, plays a role in optimizing the host cell environment for viral replication without causing cell death by apoptosis. Protects the infected cells from apoptosis in order to keep them alive until the next virus generation is ready to strike. Inhibits the Fas and TNFR-mediated death signals by blocking MAP3K5/ASK1. Decreases the half-life of TP53, protecting the infected cell against p53-mediated apoptosis. Inhibits the apoptotic signals regulated by the Bcl-2 family proteins through the formation of a Nef/PI3-kinase/PAK2 complex that leads to activation of PAK2 and induces phosphorylation of host BAD. In terms of biological role, extracellular Nef protein targets CD4(+) T-lymphocytes for apoptosis by interacting with CXCR4 surface receptors. The protein is Protein Nef of Human immunodeficiency virus type 1 group M subtype B (isolate Lai) (HIV-1).